The primary structure comprises 244 residues: Mitochondrial import inner membrane translocase subunit Tim21 (244 aa).

Residues 1–18 (MICTLLRAVRCTERLHGC) constitute a mitochondrion transit peptide. Positions 69–89 (VRSPQSAKEDGSKQVSVHRSQ) are disordered. A helical transmembrane segment spans residues 108 to 128 (FTYLIVVLIGISITGGLFYTI).

This sequence belongs to the TIM21 family. As to quaternary structure, component of the TIM23 complex. Component of the MITRAC (mitochondrial translation regulation assembly intermediate of cytochrome c oxidase complex) complex, the core components of this complex being COA3/MITRAC12 and COX14. Interacts with COA3 and MT-CO1/COX1.

It is found in the mitochondrion membrane. In terms of biological role, participates in the translocation of transit peptide-containing proteins across the mitochondrial inner membrane. Also required for assembly of mitochondrial respiratory chain complex I and complex IV as component of the MITRAC (mitochondrial translation regulation assembly intermediate of cytochrome c oxidase complex) complex. Probably shuttles between the presequence translocase and respiratory-chain assembly intermediates in a process that promotes incorporation of early nuclear-encoded subunits into these complexes. This Bos taurus (Bovine) protein is Mitochondrial import inner membrane translocase subunit Tim21 (TIMM21).